Here is a 130-residue protein sequence, read N- to C-terminus: Glycine cleavage system H protein (130 aa).

The 83-residue stretch at 23–105 folds into the Lipoyl-binding domain; that stretch reads IGIIGITDFA…YGKGWMIKVE (83 aa). Lys-64 is subject to N6-lipoyllysine.

It belongs to the GcvH family. The glycine cleavage system is composed of four proteins: P, T, L and H. Requires (R)-lipoate as cofactor.

Its function is as follows. The glycine cleavage system catalyzes the degradation of glycine. The H protein shuttles the methylamine group of glycine from the P protein to the T protein. The protein is Glycine cleavage system H protein of Carboxydothermus hydrogenoformans (strain ATCC BAA-161 / DSM 6008 / Z-2901).